A 198-amino-acid polypeptide reads, in one-letter code: Ribonuclease HII (198 aa).

In terms of domain architecture, RNase H type-2 spans 1-198 (MLCGIDEAGR…QRRSFFVKNL (198 aa)). Aspartate 6, glutamate 7, and aspartate 112 together coordinate a divalent metal cation.

The protein belongs to the RNase HII family. Requires Mn(2+) as cofactor. The cofactor is Mg(2+).

The protein localises to the cytoplasm. It carries out the reaction Endonucleolytic cleavage to 5'-phosphomonoester.. Endonuclease that specifically degrades the RNA of RNA-DNA hybrids. In Treponema denticola (strain ATCC 35405 / DSM 14222 / CIP 103919 / JCM 8153 / KCTC 15104), this protein is Ribonuclease HII.